Here is a 337-residue protein sequence, read N- to C-terminus: Protein ABHD13 (337 aa).

A helical; Signal-anchor for type II membrane protein transmembrane segment spans residues 30-50 (LLALILTFHLYGGFVLLGLIL). Residues serine 193, aspartate 268, and histidine 298 each act as charge relay system in the active site. Asparagine 299 carries N-linked (GlcNAc...) asparagine glycosylation.

Belongs to the serine esterase family.

It is found in the membrane. The polypeptide is Protein ABHD13 (Danio rerio (Zebrafish)).